We begin with the raw amino-acid sequence, 251 residues long: Maleate isomerase (251 aa).

Residues asparagine 15, 81 to 83, tyrosine 138, and asparagine 168 each bind substrate; that span reads CLV. Cysteine 81 (nucleophile) is an active-site residue. Position 81 is an S-(2-succinyl)cysteine (cysteine 81). The active-site Proton donor is the cysteine 199. A substrate-binding site is contributed by 200 to 201; it reads VQ.

This sequence belongs to the maleate isomerase family. As to quaternary structure, homodimer.

It catalyses the reaction maleate = fumarate. Functionally, catalyzes cis-trans isomerization of the C2-C3 double bond in maleate to yield fumarate. This chain is Maleate isomerase, found in Geobacillus stearothermophilus (Bacillus stearothermophilus).